Here is a 343-residue protein sequence, read N- to C-terminus: Selenide, water dikinase (343 aa).

Residue U15 is part of the active site. Residue U15 is a non-standard amino acid, selenocysteine. ATP is bound by residues K18 and 45 to 47; that span reads TAD. D48 is a binding site for Mg(2+). ATP is bound by residues D65, D88, and 135–137; that span reads GHT. Residue D88 participates in Mg(2+) binding. Mg(2+) is bound at residue D223.

Belongs to the selenophosphate synthase 1 family. Class I subfamily. As to quaternary structure, homodimer. Mg(2+) serves as cofactor.

The enzyme catalyses hydrogenselenide + ATP + H2O = selenophosphate + AMP + phosphate + 2 H(+). Functionally, synthesizes selenophosphate from selenide and ATP. The protein is Selenide, water dikinase of Carboxydothermus hydrogenoformans (strain ATCC BAA-161 / DSM 6008 / Z-2901).